Here is a 209-residue protein sequence, read N- to C-terminus: Large ribosomal subunit protein uL3 (209 aa).

Residues 121 to 154 form a disordered region; the sequence is GGIKRHNFHRGPMAHGSKYHRRPGSSAAKGPART.

This sequence belongs to the universal ribosomal protein uL3 family. Part of the 50S ribosomal subunit. Forms a cluster with proteins L14 and L19.

Its function is as follows. One of the primary rRNA binding proteins, it binds directly near the 3'-end of the 23S rRNA, where it nucleates assembly of the 50S subunit. The polypeptide is Large ribosomal subunit protein uL3 (Desulforamulus reducens (strain ATCC BAA-1160 / DSM 100696 / MI-1) (Desulfotomaculum reducens)).